We begin with the raw amino-acid sequence, 254 residues long: Probable pectate lyase E (254 aa).

An N-terminal signal peptide occupies residues Met1–Ala17. A glycan (N-linked (GlcNAc...) asparagine) is linked at Asn175. The disordered stretch occupies residues Thr227–Cys254.

Belongs to the polysaccharide lyase 3 family. Requires Ca(2+) as cofactor.

The protein resides in the secreted. It carries out the reaction Eliminative cleavage of (1-&gt;4)-alpha-D-galacturonan to give oligosaccharides with 4-deoxy-alpha-D-galact-4-enuronosyl groups at their non-reducing ends.. In terms of biological role, pectinolytic enzyme consist of four classes of enzymes: pectin lyase, polygalacturonase, pectin methylesterase and rhamnogalacturonase. Among pectinolytic enzymes, pectin lyase is the most important in depolymerization of pectin, since it cleaves internal glycosidic bonds of highly methylated pectins. Favors pectate, the anion, over pectin, the methyl ester. The protein is Probable pectate lyase E (plyE) of Neosartorya fischeri (strain ATCC 1020 / DSM 3700 / CBS 544.65 / FGSC A1164 / JCM 1740 / NRRL 181 / WB 181) (Aspergillus fischerianus).